A 680-amino-acid chain; its full sequence is DNA-directed RNA polymerase subunit beta' (680 aa).

Zn(2+) contacts are provided by C69, C71, C87, and C90. 3 residues coordinate Mg(2+): D489, D491, and D493.

It belongs to the RNA polymerase beta' chain family. RpoC1 subfamily. As to quaternary structure, in plastids the minimal PEP RNA polymerase catalytic core is composed of four subunits: alpha, beta, beta', and beta''. When a (nuclear-encoded) sigma factor is associated with the core the holoenzyme is formed, which can initiate transcription. It depends on Mg(2+) as a cofactor. Zn(2+) is required as a cofactor.

It is found in the plastid. It localises to the chloroplast. The catalysed reaction is RNA(n) + a ribonucleoside 5'-triphosphate = RNA(n+1) + diphosphate. DNA-dependent RNA polymerase catalyzes the transcription of DNA into RNA using the four ribonucleoside triphosphates as substrates. The sequence is that of DNA-directed RNA polymerase subunit beta' from Ceratophyllum demersum (Rigid hornwort).